Consider the following 103-residue polypeptide: Large ribosomal subunit protein bL21 (103 aa).

The protein belongs to the bacterial ribosomal protein bL21 family. In terms of assembly, part of the 50S ribosomal subunit. Contacts protein L20.

This protein binds to 23S rRNA in the presence of protein L20. This chain is Large ribosomal subunit protein bL21, found in Mycobacteroides abscessus (strain ATCC 19977 / DSM 44196 / CCUG 20993 / CIP 104536 / JCM 13569 / NCTC 13031 / TMC 1543 / L948) (Mycobacterium abscessus).